Consider the following 360-residue polypeptide: Peptide chain release factor 1 (360 aa).

An N5-methylglutamine modification is found at Q235.

Belongs to the prokaryotic/mitochondrial release factor family. In terms of processing, methylated by PrmC. Methylation increases the termination efficiency of RF1.

The protein resides in the cytoplasm. Peptide chain release factor 1 directs the termination of translation in response to the peptide chain termination codons UAG and UAA. In Burkholderia pseudomallei (strain 1106a), this protein is Peptide chain release factor 1.